The primary structure comprises 67 residues: Cold shock protein (67 aa).

In terms of domain architecture, CSD spans 4–64; the sequence is GTVKWFNAEK…GAKGPQATGV (61 aa).

It localises to the cytoplasm. The chain is Cold shock protein (csp) from Arthrobacter globiformis.